Here is a 517-residue protein sequence, read N- to C-terminus: Cytochrome P450 monooxygenase polD (517 aa).

A helical membrane pass occupies residues 5–27 (VVLVGIVVLVLAYLSSTGKVYPH). Position 435 (Cys-435) interacts with heme.

Belongs to the cytochrome P450 family. The cofactor is heme.

The protein resides in the membrane. Cytochrome P450 monooxygenase; part of the gene cluster that mediates the biosynthesis of antifungal fernane-type triterpenoid polytolypin. PolD doe not seem to be involved in the biosynthesis of polytolypin. Within the pathway, the triterpene cyclase polA first catalyzes the cyclization of 2,3-oxidosqualene to motiol, polc converts the 4-alpha-methyl group of motiol to a carboxyl group, polB is responsible for appending a hydroxyl group at the 2-alpha position and polE is a dual functional P450, which can catalyze the formation of both the 1-beta-hydroxyl group and 10-beta-carboxyl group. The chain is Cytochrome P450 monooxygenase polD from Polytolypa hystricis (strain UAMH7299).